The primary structure comprises 213 residues: Putative thiamine-phosphate synthase (213 aa).

4-amino-2-methyl-5-(diphosphooxymethyl)pyrimidine-binding positions include 38–42 (QLREK) and Asn70. Residue Asp71 participates in Mg(2+) binding. 4-amino-2-methyl-5-(diphosphooxymethyl)pyrimidine is bound at residue Ser109. 2-[(2R,5Z)-2-carboxy-4-methylthiazol-5(2H)-ylidene]ethyl phosphate is bound at residue 135 to 137 (TPS). Residue Lys138 participates in 4-amino-2-methyl-5-(diphosphooxymethyl)pyrimidine binding. 2-[(2R,5Z)-2-carboxy-4-methylthiazol-5(2H)-ylidene]ethyl phosphate contacts are provided by residues Gly166 and 186 to 187 (IS).

This sequence belongs to the thiamine-phosphate synthase family. Mg(2+) is required as a cofactor.

It catalyses the reaction 2-[(2R,5Z)-2-carboxy-4-methylthiazol-5(2H)-ylidene]ethyl phosphate + 4-amino-2-methyl-5-(diphosphooxymethyl)pyrimidine + 2 H(+) = thiamine phosphate + CO2 + diphosphate. The catalysed reaction is 2-(2-carboxy-4-methylthiazol-5-yl)ethyl phosphate + 4-amino-2-methyl-5-(diphosphooxymethyl)pyrimidine + 2 H(+) = thiamine phosphate + CO2 + diphosphate. It carries out the reaction 4-methyl-5-(2-phosphooxyethyl)-thiazole + 4-amino-2-methyl-5-(diphosphooxymethyl)pyrimidine + H(+) = thiamine phosphate + diphosphate. The protein operates within cofactor biosynthesis; thiamine diphosphate biosynthesis; thiamine phosphate from 4-amino-2-methyl-5-diphosphomethylpyrimidine and 4-methyl-5-(2-phosphoethyl)-thiazole: step 1/1. Its function is as follows. Condenses 4-methyl-5-(beta-hydroxyethyl)thiazole monophosphate (THZ-P) and 2-methyl-4-amino-5-hydroxymethyl pyrimidine pyrophosphate (HMP-PP) to form thiamine monophosphate (TMP). The protein is Putative thiamine-phosphate synthase (thiE) of Geobacter sulfurreducens (strain ATCC 51573 / DSM 12127 / PCA).